The following is a 908-amino-acid chain: Magnesium-transporting ATPase, P-type 1 (908 aa).

Positions 1 to 20 are enriched in basic and acidic residues; that stretch reads MTDMNIENRKLNRPASENDK. The segment at 1-21 is disordered; that stretch reads MTDMNIENRKLNRPASENDKQ. At 1 to 80 the chain is on the cytoplasmic side; the sequence is MTDMNIENRK…QVPPALIQLL (80 aa). A helical transmembrane segment spans residues 81-101; the sequence is QAFNNPFIYVLMALAGVSFIT. The Extracellular segment spans residues 102-113; that stretch reads DYWLPLRRGEET. A helical transmembrane segment spans residues 114-134; that stretch reads DLTGVLIILTMVSLSGLLRFW. Residues 135–293 lie on the Cytoplasmic side of the membrane; the sequence is QEFRTNRAAQ…QTAFDRGVNS (159 aa). A helical transmembrane segment spans residues 294 to 314; sequence VSWLLIRFMLIMVPVVLLING. Over 315–323 the chain is Extracellular; that stretch reads FSKGDWVEA. Residues 324–341 traverse the membrane as a helical segment; the sequence is SLFALAVAVGLTPEMLPM. Glu337 is a binding site for Mg(2+). The Cytoplasmic segment spans residues 342-704; sequence IVSSNLAKGA…IKGRETFGNI (363 aa). Asp379 functions as the 4-aspartylphosphate intermediate in the catalytic mechanism. Mg(2+)-binding residues include Asp650, Asp654, and Asn718. Residues 705–724 form a helical membrane-spanning segment; the sequence is IKYLNMTASSNFGNVFSVLV. Topologically, residues 725 to 733 are extracellular; sequence ASAFIPFLP. Residues 734 to 753 traverse the membrane as a helical segment; sequence MLAIHLLIQNLMYDISQLSL. The Mg(2+) site is built by Asn743 and Asp747. Residues 754 to 775 are Cytoplasmic-facing; the sequence is PWDKMDKEFLRKPRKWDAKNIG. A helical transmembrane segment spans residues 776–799; that stretch reads RFMLWIGPTSSIFDITTFALMWYV. Residues 800–808 lie on the Extracellular side of the membrane; that stretch reads FAANNVEAQ. A helical membrane pass occupies residues 809 to 827; the sequence is ALFQSGWFIEGLLSQTLVV. At 828–840 the chain is on the cytoplasmic side; that stretch reads HMLRTQKIPFIQS. Residues 841–860 form a helical membrane-spanning segment; the sequence is RATLPVLLTTGLIMAIGIYI. Over 861 to 875 the chain is Extracellular; the sequence is PFSPLGAMVGLEPLP. Residues 876-895 traverse the membrane as a helical segment; it reads LSYFPWLVATLLSYCLVAQG. Residues 896 to 908 lie on the Cytoplasmic side of the membrane; the sequence is MKRFYIKRFGQWF.

The protein belongs to the cation transport ATPase (P-type) (TC 3.A.3) family. Type IIIB subfamily.

It localises to the cell inner membrane. The catalysed reaction is Mg(2+)(out) + ATP + H2O = Mg(2+)(in) + ADP + phosphate + H(+). Its function is as follows. Mediates magnesium influx to the cytosol. This is Magnesium-transporting ATPase, P-type 1 (mgtB) from Salmonella typhimurium (strain LT2 / SGSC1412 / ATCC 700720).